A 1812-amino-acid polypeptide reads, in one-letter code: Breast cancer type 1 susceptibility protein homolog (1812 aa).

Position 1 is an N-acetylmethionine (Met1). Residues 24 to 65 (CPICLELIKEPVSTKCDHIFCKFCMLKLLNQKKGPSQCPLCK) form an RING-type zinc finger. Residue Lys109 forms a Glycyl lysine isopeptide (Lys-Gly) (interchain with G-Cter in SUMO2) linkage. A Phosphoserine modification is found at Ser114. The span at 165-176 (KKNRQTQPRKKS) shows a compositional bias: basic residues. The tract at residues 165 to 198 (KKNRQTQPRKKSVYIELDSDSSEETVTKPGDCSV) is disordered. Lys298 is covalently cross-linked (Glycyl lysine isopeptide (Lys-Gly) (interchain with G-Cter in SUMO2)). A compositionally biased stretch (polar residues) spans 321 to 332 (SKGTCNDRQVPS). The tract at residues 321–362 (SKGTCNDRQVPSTGEKVGPNADSLSDREKWTHPQSLCPENSG) is disordered. Residue Lys336 forms a Glycyl lysine isopeptide (Lys-Gly) (interchain with G-Cter in SUMO2) linkage. Residues 352–362 (HPQSLCPENSG) show a composition bias toward polar residues. Ser392 bears the Phosphoserine mark. Glycyl lysine isopeptide (Lys-Gly) (interchain with G-Cter in SUMO2) cross-links involve residues Lys440, Lys456, and Lys512. Disordered regions lie at residues 492–581 (PFTN…AKSI) and 640–767 (SEET…VSDT). Over residues 538–556 (QAVSTTSNCQENKIAGSNL) the composition is skewed to polar residues. Composition is skewed to basic and acidic residues over residues 557–572 (QKEK…RKEP) and 669–679 (ADAKKNEPNEH). A phosphoserine mark is found at Ser686, Ser706, and Ser717. 2 stretches are compositionally biased toward polar residues: residues 702-733 (TSCS…QMSD) and 758-767 (STSVSLVSDT). The residue at position 831 (Ser831) is a Phosphoserine. Disordered stretches follow at residues 864-899 (KPRS…GQEE), 947-995 (GLSA…STEM), 1030-1056 (VCST…PPLD), 1147-1185 (RESS…EDED), and 1205-1230 (CSSA…SSSD). The segment covering 947–972 (GLSATGKSGISQNSHFKQSVSPIRSS) has biased composition (polar residues). Phosphoserine; by CHEK2 is present on Ser971. Residues 973-991 (IKTDNRKPLTEGRFERHTS) show a composition bias toward basic and acidic residues. Ser992 carries the post-translational modification Phosphoserine. Lys1048 participates in a covalent cross-link: Glycyl lysine isopeptide (Lys-Gly) (interchain with G-Cter in SUMO2). Residues 1151–1166 (RSPSPVTHASKSQSLH) are compositionally biased toward polar residues. Phosphoserine is present on residues Ser1152, Ser1154, Ser1174, and Ser1180. Over residues 1175-1185 (SEESDSTEDED) the composition is skewed to acidic residues. Phosphoserine is present on Ser1241. Residues 1244–1289 (HQFSEDPRCSGSMFSSQHSAAQGSTANANSQDSNFIPPSKQRSHQC) are disordered. Residues 1255-1279 (SMFSSQHSAAQGSTANANSQDSNFI) are compositionally biased toward polar residues. Residues Ser1297 and Ser1303 each carry the phosphoserine modification. A compositionally biased stretch (acidic residues) spans 1313 to 1323 (EEDNDQEEDSI). The disordered stretch occupies residues 1313–1343 (EEDNDQEEDSIIPDSEASGYESETNLSEDCS). Polar residues predominate over residues 1333 to 1343 (ESETNLSEDCS). Residue Ser1343 is modified to Phosphoserine. Phosphothreonine is present on Thr1350. The interval 1353–1380 (RATMKYNLIKLQQEMAHLEAVLEQRGNQ) is interaction with PALB2. A phosphoserine mark is found at Ser1413, Ser1481, and Ser1495. Residues 1437 to 1547 (HLEGPTSGDD…AHIGTTPAST (111 aa)) are disordered. Over residues 1492-1504 (EASSEPHNSTGQS) the composition is skewed to polar residues. The span at 1527–1538 (RDPESESPKEPA) shows a compositional bias: basic and acidic residues. 2 consecutive BRCT domains span residues 1585–1679 (SEER…EFEV) and 1698–1797 (SREK…AYLV).

In terms of assembly, heterodimer with BARD1. Part of the BRCA1-associated genome surveillance complex (BASC), which contains BRCA1, MSH2, MSH6, MLH1, ATM, BLM, PMS2 and the MRE11-RAD50-NBN protein (MRN) complex. This association could be a dynamic process changing throughout the cell cycle and within subnuclear domains. Component of the BRCA1-A complex, at least composed of BRCA1, BARD1, UIMC1/RAP80, ABRAXAS1, BRCC3/BRCC36, BABAM2 and BABAM1/NBA1. Interacts (via the BRCT domains) with ABRAXAS1 (phosphorylated form); this is important for recruitment to sites of DNA damage. Can form a heterotetramer with two molecules of ABRAXAS1 (phosphorylated form). Component of the BRCA1-RBBP8 complex. Interacts (via the BRCT domains) with RBBP8 ('Ser-327' phosphorylated form); the interaction ubiquitinates RBBP8, regulates CHEK1 activation, and involves RBBP8 in BRCA1-dependent G2/M checkpoint control on DNA damage. Associates with RNA polymerase II holoenzyme. Interacts with SMC1A, NELFB, DCLRE1C, CLSPN. CHEK1, CHEK2, BAP1, BRCC3, UBXN1 and PCLAF. Interacts (via BRCT domains) with BRIP1 (phosphorylated form). Interacts with FANCD2 (ubiquitinated form). Interacts with H2AX (phosphorylated on 'Ser-140'). Interacts (via the BRCT domains) with ACACA (phosphorylated form); the interaction prevents dephosphorylation of ACACA. Part of a BRCA complex containing BRCA1, BRCA2 and PALB2. Interacts directly with PALB2; the interaction is essential for its function in HRR. Interacts directly with BRCA2; the interaction occurs only in the presence of PALB2 which serves as the bridging protein. Interacts (via the BRCT domains) with LMO4; the interaction represses the transcriptional activity of BRCA1. Interacts (via the BRCT domains) with CCAR2 (via N-terminus); the interaction represses the transcriptional activator activity of BRCA1. Interacts with EXD2. Interacts (via C-terminus) with DHX9; this interaction is direct and links BRCA1 to the RNA polymerase II holoenzyme. Interacts with DNA helicase ZGRF1; the interaction is increased following DNA damage induction. Post-translationally, phosphorylated in response to IR, UV, and various stimuli that cause checkpoint activation, probably by ATM or ATR. Phosphorylation at Ser-971 by CHEK2 regulates mitotic spindle assembly. Phosphorylation by AURKA regulates centrosomal microtubule nucleation. In terms of processing, autoubiquitinated, undergoes 'Lys-6'-linked polyubiquitination. 'Lys-6'-linked polyubiquitination does not promote degradation. As to expression, in the embryo, expressed in otic vesicles at day 9.5. At day 10.5, this expression decreases and high levels are found in the neuroectoderm. At days 11-12.5, high levels in differentiating keratinocytes and whisker pad primordia. At days 14-17, expression also observed in kidney epithelial cells. In the adult, highest levels found in spleen, thymus, lymph nodes, epithelial organs, and alveolar and ductal epithelial cells of the mammary gland. Very low levels in brain, kidney, and skin. No expression in heart, liver or lung.

It is found in the nucleus. The protein resides in the chromosome. It localises to the cytoplasm. The enzyme catalyses S-ubiquitinyl-[E2 ubiquitin-conjugating enzyme]-L-cysteine + [acceptor protein]-L-lysine = [E2 ubiquitin-conjugating enzyme]-L-cysteine + N(6)-ubiquitinyl-[acceptor protein]-L-lysine.. The protein operates within protein modification; protein ubiquitination. In terms of biological role, E3 ubiquitin-protein ligase that specifically mediates the formation of 'Lys-6'-linked polyubiquitin chains and plays a central role in DNA repair by facilitating cellular responses to DNA damage. It is unclear whether it also mediates the formation of other types of polyubiquitin chains. The BRCA1-BARD1 heterodimer coordinates a diverse range of cellular pathways such as DNA damage repair, ubiquitination and transcriptional regulation to maintain genomic stability. Regulates centrosomal microtubule nucleation. Required for appropriate cell cycle arrests after ionizing irradiation in both the S-phase and the G2 phase of the cell cycle. Required for FANCD2 targeting to sites of DNA damage. Inhibits lipid synthesis by binding to inactive phosphorylated ACACA and preventing its dephosphorylation. Contributes to homologous recombination repair (HRR) via its direct interaction with PALB2, fine-tunes recombinational repair partly through its modulatory role in the PALB2-dependent loading of BRCA2-RAD51 repair machinery at DNA breaks. Component of the BRCA1-RBBP8 complex which regulates CHEK1 activation and controls cell cycle G2/M checkpoints on DNA damage via BRCA1-mediated ubiquitination of RBBP8. Acts as a transcriptional activator. This Mus musculus (Mouse) protein is Breast cancer type 1 susceptibility protein homolog (Brca1).